A 493-amino-acid chain; its full sequence is Galactose-1-phosphate uridylyltransferase (493 aa).

It belongs to the galactose-1-phosphate uridylyltransferase type 2 family.

It localises to the cytoplasm. It catalyses the reaction alpha-D-galactose 1-phosphate + UDP-alpha-D-glucose = alpha-D-glucose 1-phosphate + UDP-alpha-D-galactose. It functions in the pathway carbohydrate metabolism; galactose metabolism. The sequence is that of Galactose-1-phosphate uridylyltransferase from Streptococcus thermophilus (strain ATCC BAA-250 / LMG 18311).